Here is a 139-residue protein sequence, read N- to C-terminus: Large-conductance mechanosensitive channel (139 aa).

The next 2 membrane-spanning stretches (helical) occupy residues 9–29 (AFAV…GAAF) and 79–99 (IQTV…VKAI).

It belongs to the MscL family. As to quaternary structure, homopentamer.

The protein resides in the cell inner membrane. Channel that opens in response to stretch forces in the membrane lipid bilayer. May participate in the regulation of osmotic pressure changes within the cell. The sequence is that of Large-conductance mechanosensitive channel from Pseudomonas putida (strain W619).